The chain runs to 363 residues: Probable butyrate kinase (363 aa).

It belongs to the acetokinase family.

The protein resides in the cytoplasm. It carries out the reaction butanoate + ATP = butanoyl phosphate + ADP. This chain is Probable butyrate kinase, found in Maridesulfovibrio salexigens (strain ATCC 14822 / DSM 2638 / NCIMB 8403 / VKM B-1763) (Desulfovibrio salexigens).